Here is a 450-residue protein sequence, read N- to C-terminus: Bifunctional protein GlmU (450 aa).

The interval 1-229 is pyrophosphorylase; the sequence is MRRHAIILAA…VEEIMGVNDR (229 aa). Residues 8-11, Lys-22, Gln-72, and 77-78 contribute to the UDP-N-acetyl-alpha-D-glucosamine site; these read LAAG and GT. Residue Asp-102 coordinates Mg(2+). UDP-N-acetyl-alpha-D-glucosamine is bound by residues Gly-139, Glu-154, and Asn-227. Asn-227 contacts Mg(2+). The tract at residues 230-250 is linker; it reads VMLSQAENAMQRRTNHYHMLN. The interval 251-450 is N-acetyltransferase; it reads GVTIIDPDST…RQTTKEGYRK (200 aa). Residues Arg-332 and Lys-350 each coordinate UDP-N-acetyl-alpha-D-glucosamine. The active-site Proton acceptor is His-362. UDP-N-acetyl-alpha-D-glucosamine-binding residues include Tyr-365 and Asn-376. Residues 385 to 386, Ala-422, and Arg-439 each bind acetyl-CoA; that span reads NY.

In the N-terminal section; belongs to the N-acetylglucosamine-1-phosphate uridyltransferase family. The protein in the C-terminal section; belongs to the transferase hexapeptide repeat family. Homotrimer. The cofactor is Mg(2+).

Its subcellular location is the cytoplasm. The catalysed reaction is alpha-D-glucosamine 1-phosphate + acetyl-CoA = N-acetyl-alpha-D-glucosamine 1-phosphate + CoA + H(+). The enzyme catalyses N-acetyl-alpha-D-glucosamine 1-phosphate + UTP + H(+) = UDP-N-acetyl-alpha-D-glucosamine + diphosphate. It functions in the pathway nucleotide-sugar biosynthesis; UDP-N-acetyl-alpha-D-glucosamine biosynthesis; N-acetyl-alpha-D-glucosamine 1-phosphate from alpha-D-glucosamine 6-phosphate (route II): step 2/2. Its pathway is nucleotide-sugar biosynthesis; UDP-N-acetyl-alpha-D-glucosamine biosynthesis; UDP-N-acetyl-alpha-D-glucosamine from N-acetyl-alpha-D-glucosamine 1-phosphate: step 1/1. The protein operates within bacterial outer membrane biogenesis; LPS lipid A biosynthesis. Catalyzes the last two sequential reactions in the de novo biosynthetic pathway for UDP-N-acetylglucosamine (UDP-GlcNAc). The C-terminal domain catalyzes the transfer of acetyl group from acetyl coenzyme A to glucosamine-1-phosphate (GlcN-1-P) to produce N-acetylglucosamine-1-phosphate (GlcNAc-1-P), which is converted into UDP-GlcNAc by the transfer of uridine 5-monophosphate (from uridine 5-triphosphate), a reaction catalyzed by the N-terminal domain. This chain is Bifunctional protein GlmU, found in Staphylococcus aureus (strain MRSA252).